The sequence spans 551 residues: Alkaline/neutral invertase CINV1 (551 aa).

Met-1 is subject to N-acetylmethionine. Phosphoserine occurs at positions 11, 14, 44, and 61. The disordered stretch occupies residues Thr-50 to Ser-74. The segment covering Ser-53–Arg-63 has biased composition (basic and acidic residues). Thr-70 bears the Phosphothreonine mark. Ser-547 is subject to Phosphoserine.

This sequence belongs to the glycosyl hydrolase 100 family. Forms homohexamers. Interacts with PIP5K9. Interaction with PIP5K9 represses CINV1 activity. Interacts with GRF1, GRF2, GRF3, GRF4, GRF5, GRF6, GRF7, GRF8 and GRF10; these interactions are dependent of the phosphorylation at Ser-547. Phosphorylated at Ser-547 by CPK3 and CPK21. As to expression, expressed in radicle, hypocotyls, root tips and vascular cylinder, leaf vasculature, shoot stipules, trichomes, stem, stigma apex and base of siliques.

It is found in the cytoplasm. Its subcellular location is the cytosol. It localises to the nucleus. The enzyme catalyses Hydrolysis of terminal non-reducing beta-D-fructofuranoside residues in beta-D-fructofuranosides.. Functionally, cytosolic invertase that specifically cleaves sucrose into glucose and fructose and is involved in the regulation of multiple tissue development including primary root elongation, root hair growth, leaf and silique development, and floral transition. Is involved in osmotic stress-induced inhibition on lateral root growth by controlling the concentration of hexose in cells. May regulate sugar-mediated root development by controlling sucrose catabolism in root cells. Contributes to carbon partitioning and cellulose biosynthesis in seedlings. This is Alkaline/neutral invertase CINV1 from Arabidopsis thaliana (Mouse-ear cress).